Consider the following 109-residue polypeptide: U4-lycotoxin-Ls1a (109 aa).

The N-terminal stretch at 1 to 22 (MKVLVLFSVLFLTLFSYSSTEA) is a signal peptide. Residues 23–44 (IDEFDSDAEDDMLSLMANEQVR) constitute a propeptide that is removed on maturation. A knottin domain region spans residues 45–88 (AKACTPRLHDCSHDRHSCCRGELFKDVCYCFYPEGEDKTEVCSC). 4 cysteine pairs are disulfide-bonded: Cys48-Cys63, Cys55-Cys72, Cys62-Cys88, and Cys74-Cys86. A linear cationic cytotoxin domain region spans residues 89 to 108 (QQPKSHKYIEKVVDKAKTVV).

This sequence belongs to the neurotoxin 19 (CSTX) family. 05 (U4-Lctx) subfamily. In terms of tissue distribution, expressed by the venom gland.

It localises to the secreted. Its function is as follows. Enhances the high-affinity desensitization of human P2RX3 purinoceptors. The protein is U4-lycotoxin-Ls1a of Lycosa singoriensis (Wolf spider).